The sequence spans 545 residues: Chaperonin GroEL (545 aa).

Residues 29–32, K50, 86–90, G413, and D495 each bind ATP; these read TLGP and DGTTT.

This sequence belongs to the chaperonin (HSP60) family. As to quaternary structure, forms a cylinder of 14 subunits composed of two heptameric rings stacked back-to-back. Interacts with the co-chaperonin GroES.

It is found in the cytoplasm. The enzyme catalyses ATP + H2O + a folded polypeptide = ADP + phosphate + an unfolded polypeptide.. In terms of biological role, together with its co-chaperonin GroES, plays an essential role in assisting protein folding. The GroEL-GroES system forms a nano-cage that allows encapsulation of the non-native substrate proteins and provides a physical environment optimized to promote and accelerate protein folding. This Borreliella burgdorferi (strain ATCC 35210 / DSM 4680 / CIP 102532 / B31) (Borrelia burgdorferi) protein is Chaperonin GroEL.